The chain runs to 217 residues: Dual specificity phosphatase 29 (217 aa).

One can recognise a Tyrosine-protein phosphatase domain in the interval 46-194 (HVNEVWPNLY…LRELDIKLAL (149 aa)). 138–145 (HCAMGRSR) lines the substrate pocket. The active-site Phosphocysteine intermediate is the Cys139.

This sequence belongs to the protein-tyrosine phosphatase family. Non-receptor class dual specificity subfamily.

Its subcellular location is the cytoplasm. The protein localises to the nucleus. It catalyses the reaction O-phospho-L-tyrosyl-[protein] + H2O = L-tyrosyl-[protein] + phosphate. It carries out the reaction O-phospho-L-seryl-[protein] + H2O = L-seryl-[protein] + phosphate. The enzyme catalyses O-phospho-L-threonyl-[protein] + H2O = L-threonyl-[protein] + phosphate. Dual specificity phosphatase able to dephosphorylate phosphotyrosine, phosphoserine and phosphothreonine residues within the same substrate, with a preference for phosphotyrosine as a substrate. Involved in the modulation of AMPK and MAPK1/2 signaling pathways. This Anolis carolinensis (Green anole) protein is Dual specificity phosphatase 29 (DUSP29).